The following is a 68-amino-acid chain: Toxin Cg2 (68 aa).

The region spanning 1–66 (KDGYLVNKST…VYPIPGKTCS (66 aa)) is the LCN-type CS-alpha/beta domain. Cystine bridges form between C12/C65, C16/C41, C25/C46, and C29/C48.

This sequence belongs to the long (4 C-C) scorpion toxin superfamily. Sodium channel inhibitor family. As to expression, expressed by the venom gland.

It is found in the secreted. Its function is as follows. Binds to sodium channels (Nav) and inhibits them. This Centruroides gracilis (Slenderbrown scorpion) protein is Toxin Cg2.